A 226-amino-acid polypeptide reads, in one-letter code: Putative uroporphyrinogen-III synthase (226 aa).

This sequence belongs to the uroporphyrinogen-III synthase family.

The catalysed reaction is hydroxymethylbilane = uroporphyrinogen III + H2O. Its pathway is porphyrin-containing compound metabolism; protoporphyrin-IX biosynthesis; coproporphyrinogen-III from 5-aminolevulinate: step 3/4. Its function is as follows. Catalyzes cyclization of the linear tetrapyrrole, hydroxymethylbilane, to the macrocyclic uroporphyrinogen III. This Archaeoglobus fulgidus (strain ATCC 49558 / DSM 4304 / JCM 9628 / NBRC 100126 / VC-16) protein is Putative uroporphyrinogen-III synthase.